Consider the following 162-residue polypeptide: uncharacterized protein (162 aa).

A helical membrane pass occupies residues 7–27; sequence LGGVMLFAIVSLMVCGCMVVF.

The protein resides in the membrane. This is an uncharacterized protein from Methanocaldococcus jannaschii (strain ATCC 43067 / DSM 2661 / JAL-1 / JCM 10045 / NBRC 100440) (Methanococcus jannaschii).